The chain runs to 279 residues: Methylthioribulose-1-phosphate dehydratase (279 aa).

Position 132 (Cys-132) interacts with substrate. Zn(2+) is bound by residues His-150 and His-152. Residue Glu-175 is the Proton donor/acceptor of the active site. His-240 contributes to the Zn(2+) binding site.

This sequence belongs to the aldolase class II family. MtnB subfamily. Zn(2+) serves as cofactor.

The protein resides in the cytoplasm. The catalysed reaction is 5-(methylsulfanyl)-D-ribulose 1-phosphate = 5-methylsulfanyl-2,3-dioxopentyl phosphate + H2O. Its pathway is amino-acid biosynthesis; L-methionine biosynthesis via salvage pathway; L-methionine from S-methyl-5-thio-alpha-D-ribose 1-phosphate: step 2/6. Functionally, catalyzes the dehydration of methylthioribulose-1-phosphate (MTRu-1-P) into 2,3-diketo-5-methylthiopentyl-1-phosphate (DK-MTP-1-P). The polypeptide is Methylthioribulose-1-phosphate dehydratase (Candida tropicalis (strain ATCC MYA-3404 / T1) (Yeast)).